We begin with the raw amino-acid sequence, 304 residues long: Dermonecrotic toxin LiSicTox-betaIA1i (304 aa).

Residues 1 to 21 form the signal peptide; sequence MLLPAVISFIVYAVFLQEANG. Residues 22–26 constitute a propeptide that is removed on maturation; that stretch reads HAAER. The active site involves H38. 2 residues coordinate Mg(2+): E58 and D60. Residue H74 is the Nucleophile of the active site. 2 cysteine pairs are disulfide-bonded: C78-C84 and C80-C223. D118 is a binding site for Mg(2+).

This sequence belongs to the arthropod phospholipase D family. Class II subfamily. Class IIb sub-subfamily. Requires Mg(2+) as cofactor. Expressed by the venom gland.

It is found in the secreted. It catalyses the reaction an N-(acyl)-sphingosylphosphocholine = an N-(acyl)-sphingosyl-1,3-cyclic phosphate + choline. The catalysed reaction is an N-(acyl)-sphingosylphosphoethanolamine = an N-(acyl)-sphingosyl-1,3-cyclic phosphate + ethanolamine. The enzyme catalyses a 1-acyl-sn-glycero-3-phosphocholine = a 1-acyl-sn-glycero-2,3-cyclic phosphate + choline. It carries out the reaction a 1-acyl-sn-glycero-3-phosphoethanolamine = a 1-acyl-sn-glycero-2,3-cyclic phosphate + ethanolamine. In terms of biological role, dermonecrotic toxins cleave the phosphodiester linkage between the phosphate and headgroup of certain phospholipids (sphingolipid and lysolipid substrates), forming an alcohol (often choline) and a cyclic phosphate. This toxin acts on sphingomyelin (SM) with low activity. It may also act on ceramide phosphoethanolamine (CPE), lysophosphatidylcholine (LPC) and lysophosphatidylethanolamine (LPE), but not on lysophosphatidylserine (LPS), and lysophosphatidylglycerol (LPG). It acts by transphosphatidylation, releasing exclusively cyclic phosphate products as second products. Induces inflammatory response but no or very weak hemolysis, dermonecrosis, vascular permeability, edema, and cytotoxicity against renal epithelial cells. Causes swelling and erythema. In vivo, is not lethal to mice when intraperitoneally injected. This is Dermonecrotic toxin LiSicTox-betaIA1i from Loxosceles intermedia (Brown spider).